Reading from the N-terminus, the 276-residue chain is Large ribosomal subunit protein uL2 (276 aa).

Residues 225-276 (VMNPVDHPHGGGEGKTAAGRDPVSPWGTPTKGYRTRSNKRTDSMIVQKRHKR) form a disordered region.

This sequence belongs to the universal ribosomal protein uL2 family. In terms of assembly, part of the 50S ribosomal subunit. Forms a bridge to the 30S subunit in the 70S ribosome.

Functionally, one of the primary rRNA binding proteins. Required for association of the 30S and 50S subunits to form the 70S ribosome, for tRNA binding and peptide bond formation. It has been suggested to have peptidyltransferase activity; this is somewhat controversial. Makes several contacts with the 16S rRNA in the 70S ribosome. The sequence is that of Large ribosomal subunit protein uL2 from Cupriavidus taiwanensis (strain DSM 17343 / BCRC 17206 / CCUG 44338 / CIP 107171 / LMG 19424 / R1) (Ralstonia taiwanensis (strain LMG 19424)).